A 511-amino-acid chain; its full sequence is Maturase K (511 aa).

The protein belongs to the intron maturase 2 family. MatK subfamily.

The protein localises to the plastid. It localises to the chloroplast. Its function is as follows. Usually encoded in the trnK tRNA gene intron. Probably assists in splicing its own and other chloroplast group II introns. The sequence is that of Maturase K from Psathyrostachys juncea (Russian wildrye).